Here is a 689-residue protein sequence, read N- to C-terminus: uncharacterized protein (689 aa).

It is found in the mitochondrion. This is an uncharacterized protein from Schizosaccharomyces pombe (strain 972 / ATCC 24843) (Fission yeast).